We begin with the raw amino-acid sequence, 306 residues long: Recombination-associated protein RdgC (306 aa).

The protein belongs to the RdgC family.

The protein resides in the cytoplasm. Its subcellular location is the nucleoid. May be involved in recombination. This chain is Recombination-associated protein RdgC, found in Pseudomonas putida (strain GB-1).